Consider the following 858-residue polypeptide: Magnesium transporter ALR2 (858 aa).

A compositionally biased stretch (low complexity) spans Met-1 to Leu-14. Disordered stretches follow at residues Met-1–Tyr-81, Thr-318–Ser-337, and Asn-365–Asp-396. Topologically, residues Met-1 to Lys-741 are cytoplasmic. Positions Pro-46–Asp-61 are enriched in basic and acidic residues. The segment covering Ser-67–Tyr-81 has biased composition (low complexity). Composition is skewed to basic and acidic residues over residues Glu-367–Pro-379 and Asn-386–Asn-395. A helical transmembrane segment spans residues Val-742–Asn-762. Topologically, residues Val-763–Ser-771 are extracellular. A helical transmembrane segment spans residues Ile-772–Leu-792. Over Ala-793–Asn-858 the chain is Cytoplasmic.

Belongs to the CorA metal ion transporter (MIT) (TC 1.A.35) family.

Its subcellular location is the cell membrane. Its function is as follows. Plasma membrane magnesium transporter. The sequence is that of Magnesium transporter ALR2 (ALR2) from Saccharomyces cerevisiae (strain ATCC 204508 / S288c) (Baker's yeast).